Here is an 84-residue protein sequence, read N- to C-terminus: Small ribosomal subunit protein bS16 (84 aa).

Belongs to the bacterial ribosomal protein bS16 family.

In Dichelobacter nodosus (strain VCS1703A), this protein is Small ribosomal subunit protein bS16.